Reading from the N-terminus, the 122-residue chain is Large ribosomal subunit protein uL14 (122 aa).

Belongs to the universal ribosomal protein uL14 family. Part of the 50S ribosomal subunit. Forms a cluster with proteins L3 and L19. In the 70S ribosome, L14 and L19 interact and together make contacts with the 16S rRNA in bridges B5 and B8.

Its function is as follows. Binds to 23S rRNA. Forms part of two intersubunit bridges in the 70S ribosome. In Alkaliphilus oremlandii (strain OhILAs) (Clostridium oremlandii (strain OhILAs)), this protein is Large ribosomal subunit protein uL14.